Here is a 238-residue protein sequence, read N- to C-terminus: CD209 antigen-like protein A (238 aa).

Residues M1–Q51 are Cytoplasmic-facing. Residues V52 to L72 form a helical; Signal-anchor for type II membrane protein membrane-spanning segment. Topologically, residues V73–K238 are extracellular. Cysteines 108 and 119 form a disulfide. The C-type lectin domain maps to F115–K229. The N-linked (GlcNAc...) asparagine glycan is linked to N130. Cystine bridges form between C136/C228 and C207/C220. The Ca(2+) site is built by E198, N200, L202, E205, N216, and D217. N-linked (GlcNAc...) asparagine glycosylation is present at N216.

Predominantly expressed in dendritic cells. Detected at very low levels in lung, spleen, lymph nodes and bone marrow.

Its subcellular location is the membrane. Probable pathogen-recognition receptor. May mediate the endocytosis of pathogens which are subsequently degraded in lysosomal compartments. May recognize in a calcium-dependent manner high mannose N-linked oligosaccharides in a variety of pathogen antigens. The protein is CD209 antigen-like protein A (Cd209a) of Mus musculus (Mouse).